The chain runs to 28 residues: Short cationic peptide-1c (28 aa).

The residue at position 28 (glutamate 28) is a Glutamic acid 1-amide.

In terms of tissue distribution, expressed by the venom gland.

The protein resides in the secreted. This chain is Short cationic peptide-1c, found in Cupiennius salei (American wandering spider).